The primary structure comprises 69 residues: DNA gyrase inhibitor YacG (69 aa).

4 residues coordinate Zn(2+): cysteine 7, cysteine 10, cysteine 26, and cysteine 30.

This sequence belongs to the DNA gyrase inhibitor YacG family. In terms of assembly, interacts with GyrB. It depends on Zn(2+) as a cofactor.

Its function is as follows. Inhibits all the catalytic activities of DNA gyrase by preventing its interaction with DNA. Acts by binding directly to the C-terminal domain of GyrB, which probably disrupts DNA binding by the gyrase. This Shewanella putrefaciens (strain CN-32 / ATCC BAA-453) protein is DNA gyrase inhibitor YacG.